We begin with the raw amino-acid sequence, 299 residues long: Protein tantalus (299 aa).

The interval 16-100 (KDNRSPTTNS…RSSTFGARAG (85 aa)) is disordered. Positions 20 to 35 (SPTTNSNLSWQLNQMA) are enriched in polar residues. A compositionally biased stretch (acidic residues) spans 53–69 (ESDDNVSSESHDSDDVD). Positions 84 to 93 (CISGSSRRSS) are enriched in low complexity. Ser-204 and Ser-264 each carry phosphoserine.

In terms of assembly, binds to DNA in vitro. Interacts directly with Asx. Ubiquitously expressed in precellularized embryos. Then it decreases at cellular blastoderm to increase again during germ band extension. During germ band extension, it is highly expressed in somatic and visceral mesoderm. Ubiquitously expressed in imaginal disks. In ovary, it is expressed from stage 10.

It localises to the nucleus. The protein resides in the cytoplasm. It is found in the chromosome. In terms of biological role, potential cofactor involved in sensory organ development. Despite its interaction with the Polycomb group protein Asx, it does not regulate the expression of homeotic genes. This chain is Protein tantalus, found in Drosophila melanogaster (Fruit fly).